A 211-amino-acid chain; its full sequence is Ribonuclease HII (211 aa).

Residues 24–211 (QLIAGVDEVG…KPVKKALGLD (188 aa)) enclose the RNase H type-2 domain. 3 residues coordinate a divalent metal cation: aspartate 30, glutamate 31, and aspartate 122.

The protein belongs to the RNase HII family. Mn(2+) is required as a cofactor. The cofactor is Mg(2+).

It is found in the cytoplasm. It catalyses the reaction Endonucleolytic cleavage to 5'-phosphomonoester.. Endonuclease that specifically degrades the RNA of RNA-DNA hybrids. The chain is Ribonuclease HII from Vibrio parahaemolyticus serotype O3:K6 (strain RIMD 2210633).